Consider the following 533-residue polypeptide: NAD(P)H-quinone oxidoreductase chain 4 (533 aa).

Transmembrane regions (helical) follow at residues 5 to 25 (VPWL…VPLV), 36 to 56 (WYAL…YLTG), 70 to 90 (VSWL…LSMP), 91 to 111 (LILL…PVSF), 115 to 135 (LFYF…AVQD), 137 to 157 (LLFF…LAIW), 169 to 189 (FILY…AMGF), 210 to 230 (GFQL…LPIV), 244 to 264 (TAPV…YALL), 278 to 298 (FAPL…LTSF), 315 to 335 (MGFV…GAML), 336 to 356 (QMIS…ATYD), 377 to 397 (FALW…SGFV), 418 to 438 (VVIC…LLSM), and 465 to 485 (VYII…PKLM).

The protein belongs to the complex I subunit 4 family.

The protein resides in the cellular thylakoid membrane. It carries out the reaction a plastoquinone + NADH + (n+1) H(+)(in) = a plastoquinol + NAD(+) + n H(+)(out). The enzyme catalyses a plastoquinone + NADPH + (n+1) H(+)(in) = a plastoquinol + NADP(+) + n H(+)(out). In terms of biological role, NDH-1 shuttles electrons from NAD(P)H, via FMN and iron-sulfur (Fe-S) centers, to quinones in the respiratory chain. The immediate electron acceptor for the enzyme in this species is believed to be plastoquinone. Couples the redox reaction to proton translocation (for every two electrons transferred, four hydrogen ions are translocated across the cytoplasmic membrane), and thus conserves the redox energy in a proton gradient. The chain is NAD(P)H-quinone oxidoreductase chain 4 from Synechococcus sp. (strain CC9605).